Consider the following 132-residue polypeptide: Small ribosomal subunit protein uS8 (132 aa).

It belongs to the universal ribosomal protein uS8 family. Part of the 30S ribosomal subunit. Contacts proteins S5 and S12.

Its function is as follows. One of the primary rRNA binding proteins, it binds directly to 16S rRNA central domain where it helps coordinate assembly of the platform of the 30S subunit. The sequence is that of Small ribosomal subunit protein uS8 from Clostridium botulinum (strain 657 / Type Ba4).